Consider the following 318-residue polypeptide: Acetyl-coenzyme A carboxylase carboxyl transferase subunit alpha (318 aa).

The 251-residue stretch at arginine 43–serine 293 folds into the CoA carboxyltransferase C-terminal domain.

It belongs to the AccA family. Acetyl-CoA carboxylase is a heterohexamer composed of biotin carboxyl carrier protein (AccB), biotin carboxylase (AccC) and two subunits each of ACCase subunit alpha (AccA) and ACCase subunit beta (AccD).

The protein resides in the cytoplasm. The catalysed reaction is N(6)-carboxybiotinyl-L-lysyl-[protein] + acetyl-CoA = N(6)-biotinyl-L-lysyl-[protein] + malonyl-CoA. It participates in lipid metabolism; malonyl-CoA biosynthesis; malonyl-CoA from acetyl-CoA: step 1/1. Component of the acetyl coenzyme A carboxylase (ACC) complex. First, biotin carboxylase catalyzes the carboxylation of biotin on its carrier protein (BCCP) and then the CO(2) group is transferred by the carboxyltransferase to acetyl-CoA to form malonyl-CoA. In Bartonella bacilliformis (strain ATCC 35685 / KC583 / Herrer 020/F12,63), this protein is Acetyl-coenzyme A carboxylase carboxyl transferase subunit alpha.